The chain runs to 104 residues: Replication restart protein PriB (104 aa).

Residues 1-101 (MTNRLVLSGT…LHAEQIELID (101 aa)) form the SSB domain.

This sequence belongs to the PriB family. As to quaternary structure, homodimer. Interacts with PriA and DnaT. Component of the replication restart primosome. Primosome assembly occurs via a 'hand-off' mechanism. PriA binds to replication forks, subsequently PriB then DnaT bind; DnaT then displaces ssDNA to generate the helicase loading substrate.

Involved in the restart of stalled replication forks, which reloads the replicative helicase on sites other than the origin of replication; the PriA-PriB pathway is the major replication restart pathway. During primosome assembly it facilitates complex formation between PriA and DnaT on DNA; stabilizes PriA on DNA. Stimulates the DNA unwinding activity of PriA helicase. The polypeptide is Replication restart protein PriB (Shigella dysenteriae serotype 1 (strain Sd197)).